Reading from the N-terminus, the 323-residue chain is Mitochondrial glutamate carrier 1 (323 aa).

3 Solcar repeats span residues 6 to 93 (ISLP…FRHQ), 101 to 214 (LTLP…LNQL), and 223 to 312 (SPFY…GIAE). 6 helical membrane passes run 12-32 (LING…IDLA), 62-82 (YFGM…EKAI), 107-127 (MLAG…MEML), 189-209 (GLGA…PLFA), 223-243 (SPFY…AVAV), and 292-312 (ALVI…GIAE).

The protein belongs to the mitochondrial carrier (TC 2.A.29) family.

It is found in the mitochondrion inner membrane. The catalysed reaction is L-glutamate(in) + H(+)(in) = L-glutamate(out) + H(+)(out). Its function is as follows. Mitochondrial glutamate/H(+) symporter. Responsible for the transport of glutamate from the cytosol into the mitochondrial matrix with the concomitant import of a proton. Plays a role in the control of glucose-stimulated insulin secretion. This chain is Mitochondrial glutamate carrier 1 (Slc25a22), found in Mus musculus (Mouse).